The chain runs to 722 residues: MALLVWSSLVVASLHLLGTAAYPSRSKYTVINENCPGAEWNIMCRDCCEYDQVECACPDGNQKVGYTIPCCRNEENECDSCLIHPGCSIFENCKSCNNGSWGGTLDDFYIKGSYCSECRMGWYGGDCMRCGEVIQAARGEIMLESYPFNARCEWSIQVAPGYTVELRFGMLSLEFDYMCQYDYLEVRDGDNVDAKILKRFCGNQRPLSLRSTGNSLHLLFQSDGSKNFDGFYVTFEEVTGCSSTPCFHDGTCIADKTGSYRCACLAGYTGRHCENVIEEKSCKDPGAPMNGYRKLPDGAGLSLANHIKVGFKIHYFCNNSYVLSGNQERACLQGAQWSGKQPVCIKACKEPKVADLVRQKVLPSLVQSRETPLHQLYSASFTKEKTDILPTKKPALPPGELPPGYQHLHTQLQYDCVSPFYRRTGSSRRTCLKTGKWSGRAPSCIPICGKLENFNITQLGEQRWPWQAALYRRSNGVKDASLRKGSWVLVCSGALLNERTVVMAAHCVTDLGKSSIIKVSDMKVVLGKFYRDDDREEKSQQHLHISAVIVNPNYDPILLDSDIAVIKLLDKARVSDYVQPVCLTLATEMITSPQEYTIVISGWKILSDPRAPGSKNETIRAGAIEPVDSLQCEQQYEENGISVSVTESMFCAKQEPRPSPSICPSETGGITTVLLPSPTSPEGSWHLIGLVSWGYDKSCRKDLYTGYTKVVTFKEWLEKNMK.

The first 21 residues, 1–21, serve as a signal peptide directing secretion; the sequence is MALLVWSSLVVASLHLLGTAA. Asn-98 carries N-linked (GlcNAc...) asparagine glycosylation. Intrachain disulfides connect Cys-130–Cys-152, Cys-179–Cys-201, Cys-241–Cys-252, Cys-246–Cys-262, Cys-264–Cys-273, Cys-282–Cys-331, Cys-317–Cys-344, and Cys-416–Cys-444. The CUB domain maps to 130-238; that stretch reads CGEVIQAARG…DGFYVTFEEV (109 aa). One can recognise an EGF-like domain in the interval 237-274; sequence EVTGCSSTPCFHDGTCIADKTGSYRCACLAGYTGRHCE. Sushi domains are found at residues 280 to 346 and 393 to 446; these read KSCK…VCIK and KPAL…SCIP. Asn-318 is a glycosylation site (N-linked (GlcNAc...) asparagine). The Peptidase S1 domain maps to 447 to 722; sequence ICGKLENFNI…FKEWLEKNMK (276 aa). Asn-455 carries an N-linked (GlcNAc...) asparagine glycan. Cys-491 and Cys-507 are oxidised to a cystine. N-linked (GlcNAc...) asparagine glycosylation occurs at Asn-616. Disulfide bonds link Cys-632-Cys-651 and Cys-663-Cys-699.

Belongs to the peptidase S1 family.

The protein resides in the secreted. Its function is as follows. May play a role in regeneration of skeletal muscle. In Xenopus tropicalis (Western clawed frog), this protein is Inactive serine protease PAMR1 (pamr1).